A 379-amino-acid chain; its full sequence is MSQLDLGTQQLELERYPQQEESTQLQAWEAADEYLLQQLENVNIGDRPVLIFNDNFGTLACALHSHQPYSISDSYMSQLATRHNLKLNELDPQQVTLLDTLAELPASPAVVLIRIPKALALLEQQLRALRDVVAPDTVIIAGAKARDVHTSTMQLFEKVLGPTRTSLAWKKARLIHCEVADIVPPAAPVTTNWVLDGTDWVIHNHANVFSRSNLDIGARLFLDHLPHDIEGHIIDLGCGNGVIGMAALMQNPQAQVSFVDESYMAVASSELNVEHNLPQDMDRCQFEVNNSLAGIERESVQAVLCNPPFHQQHAITDHTAWQMFCDAKRCLQVGGELRIVGNRHLDYHQKLKRLFGNCTLIASNKKFVILKAVKSGARY.

Belongs to the methyltransferase superfamily. RlmG family.

The protein localises to the cytoplasm. The enzyme catalyses guanosine(1835) in 23S rRNA + S-adenosyl-L-methionine = N(2)-methylguanosine(1835) in 23S rRNA + S-adenosyl-L-homocysteine + H(+). Functionally, specifically methylates the guanine in position 1835 (m2G1835) of 23S rRNA. The chain is Ribosomal RNA large subunit methyltransferase G from Serratia proteamaculans (strain 568).